A 137-amino-acid polypeptide reads, in one-letter code: Probable disulfide formation protein C (137 aa).

A helical membrane pass occupies residues 6 to 25 (ENLMLGSWLTALTAMLGSLY). An intrachain disulfide couples Cys35 to Cys38. 2 helical membrane-spanning segments follow: residues 40–59 (YQRI…YLKR) and 66–83 (YSLW…YHYS). Cys97 and Cys102 are oxidised to a cystine. A helical transmembrane segment spans residues 111-133 (GFVTIPFLAFTAFVIIFICSLLI).

This sequence belongs to the DsbB family. BdbC subfamily.

Its subcellular location is the cell membrane. In terms of biological role, required for disulfide bond formation in some proteins. In Halalkalibacterium halodurans (strain ATCC BAA-125 / DSM 18197 / FERM 7344 / JCM 9153 / C-125) (Bacillus halodurans), this protein is Probable disulfide formation protein C.